We begin with the raw amino-acid sequence, 497 residues long: Probable small intestine urate exporter (497 aa).

N-linked (GlcNAc...) asparagine glycans are attached at residues asparagine 47, asparagine 56, asparagine 66, asparagine 75, and asparagine 90. A run of 10 helical transmembrane segments spans residues 149-169, 171-191, 203-223, 230-250, 292-312, 332-352, 368-388, 398-418, 431-451, and 461-481; these read SFLTLFIPLAANAGVALLIVL, IVQGIAQVMVLTGQYSIWVKW, IAGSGSMLGSFIVLLAGGLLC, YVFYIFGGIGCACCPLWFPLI, LPLWAILVSYFCEYWLFYTIM, ILSALPFVVGCICIILGGLLA, KLFTAIGVLFPSVILVSLPWV, FLVLSSAISSFCESGALVNFL, LLQVFAHIAGAISPTAAGFFI, and NVFLLSAAVNISGLVFYLIFG.

Belongs to the major facilitator superfamily. Sodium/anion cotransporter family. Abundantly expressed in pancreas, liver, colon and small intestine, less in kidney. Not detected in the adrenal glands, brain, placenta, heart, testis, skeletal muscle, and lungs.

It is found in the apical cell membrane. The enzyme catalyses 3 Na(+)(out) + phosphate(out) = 3 Na(+)(in) + phosphate(in). The catalysed reaction is urate(out) + n chloride(in) = urate(in) + n chloride(out). It carries out the reaction L-thyroxine(out) = L-thyroxine(in). It catalyses the reaction 3,3',5-triiodo-L-thyronine(out) = 3,3',5-triiodo-L-thyronine(in). Acts as a membrane potential-dependent organic anion transporter, the transport requires a low concentration of chloride ions. Mediates chloride-dependent transport of urate. Mediates sodium-independent high affinity transport of thyroid hormones including L-thyroxine (T4) and 3,3',5-triiodo-L-thyronine (T3). Can actively transport inorganic phosphate into cells via Na(+) cotransport. This chain is Probable small intestine urate exporter (SLC17A4), found in Homo sapiens (Human).